Consider the following 102-residue polypeptide: Small ribosomal subunit protein uS10 (102 aa).

The protein belongs to the universal ribosomal protein uS10 family. In terms of assembly, part of the 30S ribosomal subunit.

Functionally, involved in the binding of tRNA to the ribosomes. This Pyrococcus abyssi (strain GE5 / Orsay) protein is Small ribosomal subunit protein uS10.